The sequence spans 113 residues: Large ribosomal subunit protein eL31 (113 aa).

The protein belongs to the eukaryotic ribosomal protein eL31 family.

The protein is Large ribosomal subunit protein eL31 (RPL31) of Candida glabrata (strain ATCC 2001 / BCRC 20586 / JCM 3761 / NBRC 0622 / NRRL Y-65 / CBS 138) (Yeast).